A 500-amino-acid polypeptide reads, in one-letter code: Cytochrome P450 81F1 (500 aa).

A helical transmembrane segment spans residues methionine 1 to serine 21. A Glycyl lysine isopeptide (Lys-Gly) (interchain with G-Cter in ubiquitin) cross-link involves residue lysine 248. Cysteine 438 serves as a coordination point for heme.

It belongs to the cytochrome P450 family. Heme serves as cofactor.

It localises to the membrane. The protein operates within secondary metabolite biosynthesis. Functionally, involved in indole glucosinolate biosynthesis. Catalyzes hydroxylation reactions of the glucosinolate indole ring. Converts indol-3-yl-methylglucosinolate (I3M) to 4-hydroxy-indol-3-yl-methylglucosinolate (4OH-I3M) and/or 1-hydroxy-indol-3-yl-methylglucosinolate (1OH-I3M) intermediates. These hydroxy intermediates are converted to 4-methoxy-indol-3-yl-methylglucosinolate (4MO-I3M) and 1-methoxy-indol-3-yl-methylglucosinolate (1MO-I3M) by indole glucosinolate methyltransferase 1 and 2 (IGMT1 and IGMT2). This is Cytochrome P450 81F1 from Arabidopsis thaliana (Mouse-ear cress).